The primary structure comprises 508 residues: GTPase Obg (508 aa).

The 158-residue stretch at 2-159 (ARFVDRVVLH…HDVILELKSM (158 aa)) folds into the Obg domain. One can recognise an OBG-type G domain in the interval 160 to 341 (ADIGLVGFPS…LKYAMLDLVQ (182 aa)). GTP is bound by residues 166 to 173 (GFPSAGKS), 191 to 195 (FTTLQ), 212 to 215 (DVPG), 292 to 295 (NKAD), and 322 to 324 (SAV). Mg(2+) contacts are provided by S173 and T193. The 81-residue stretch at 364–444 (DARKKNKDFE…IGEVSFEWEP (81 aa)) folds into the OCT domain.

The protein belongs to the TRAFAC class OBG-HflX-like GTPase superfamily. OBG GTPase family. Monomer. It depends on Mg(2+) as a cofactor.

It localises to the cytoplasm. Its function is as follows. An essential GTPase which binds GTP, GDP and possibly (p)ppGpp with moderate affinity, with high nucleotide exchange rates and a fairly low GTP hydrolysis rate. Plays a role in control of the cell cycle, stress response, ribosome biogenesis and in those bacteria that undergo differentiation, in morphogenesis control. This chain is GTPase Obg, found in Corynebacterium diphtheriae (strain ATCC 700971 / NCTC 13129 / Biotype gravis).